The following is a 334-amino-acid chain: Nucleoid-associated protein YPTS_1390 (334 aa).

This sequence belongs to the YejK family.

The protein resides in the cytoplasm. It is found in the nucleoid. The protein is Nucleoid-associated protein YPTS_1390 of Yersinia pseudotuberculosis serotype IB (strain PB1/+).